We begin with the raw amino-acid sequence, 243 residues long: Adenosylcobinamide-GDP ribazoletransferase (243 aa).

The next 5 membrane-spanning stretches (helical) occupy residues 31–51 (LLFY…FSAL), 57–77 (LMLH…GLHL), 109–129 (IAVV…LALI), 135–155 (IGLL…FLGT), and 188–208 (VLLA…CFFW).

It belongs to the CobS family. The cofactor is Mg(2+).

The protein resides in the cell inner membrane. The enzyme catalyses alpha-ribazole + adenosylcob(III)inamide-GDP = adenosylcob(III)alamin + GMP + H(+). It catalyses the reaction alpha-ribazole 5'-phosphate + adenosylcob(III)inamide-GDP = adenosylcob(III)alamin 5'-phosphate + GMP + H(+). It functions in the pathway cofactor biosynthesis; adenosylcobalamin biosynthesis; adenosylcobalamin from cob(II)yrinate a,c-diamide: step 7/7. Functionally, joins adenosylcobinamide-GDP and alpha-ribazole to generate adenosylcobalamin (Ado-cobalamin). Also synthesizes adenosylcobalamin 5'-phosphate from adenosylcobinamide-GDP and alpha-ribazole 5'-phosphate. The polypeptide is Adenosylcobinamide-GDP ribazoletransferase (Pseudomonas savastanoi pv. phaseolicola (strain 1448A / Race 6) (Pseudomonas syringae pv. phaseolicola (strain 1448A / Race 6))).